A 516-amino-acid polypeptide reads, in one-letter code: Cytochrome P450 1A2 (516 aa).

O-linked (GlcNAc) serine glycosylation occurs at serine 69. Phenylalanine 226 contacts substrate. Residue cysteine 458 coordinates heme.

This sequence belongs to the cytochrome P450 family. As to quaternary structure, interacts with PGRMC1; the interaction requires PGRMC1 homodimerization. It depends on heme as a cofactor. Liver.

The protein localises to the endoplasmic reticulum membrane. Its subcellular location is the microsome membrane. It carries out the reaction an organic molecule + reduced [NADPH--hemoprotein reductase] + O2 = an alcohol + oxidized [NADPH--hemoprotein reductase] + H2O + H(+). The enzyme catalyses 17beta-estradiol + reduced [NADPH--hemoprotein reductase] + O2 = 2-hydroxy-17beta-estradiol + oxidized [NADPH--hemoprotein reductase] + H2O + H(+). It catalyses the reaction 17beta-estradiol + reduced [NADPH--hemoprotein reductase] + O2 = 4-hydroxy-17beta-estradiol + oxidized [NADPH--hemoprotein reductase] + H2O + H(+). The catalysed reaction is estrone + reduced [NADPH--hemoprotein reductase] + O2 = 2-hydroxyestrone + oxidized [NADPH--hemoprotein reductase] + H2O + H(+). It carries out the reaction estrone + reduced [NADPH--hemoprotein reductase] + O2 = 4-hydroxyestrone + oxidized [NADPH--hemoprotein reductase] + H2O + H(+). The enzyme catalyses cholesterol + reduced [NADPH--hemoprotein reductase] + O2 = 25-hydroxycholesterol + oxidized [NADPH--hemoprotein reductase] + H2O + H(+). It catalyses the reaction all-trans-retinol + reduced [NADPH--hemoprotein reductase] + O2 = all-trans-retinal + oxidized [NADPH--hemoprotein reductase] + 2 H2O + H(+). The catalysed reaction is all-trans-retinal + reduced [NADPH--hemoprotein reductase] + O2 = all-trans-retinoate + oxidized [NADPH--hemoprotein reductase] + H2O + 2 H(+). It carries out the reaction (5Z,8Z,11Z,14Z)-eicosatetraenoate + reduced [NADPH--hemoprotein reductase] + O2 = (14R,15S)-epoxy-(5Z,8Z,11Z)-eicosatrienoate + oxidized [NADPH--hemoprotein reductase] + H2O + H(+). The enzyme catalyses (5Z,8Z,11Z,14Z)-eicosatetraenoate + reduced [NADPH--hemoprotein reductase] + O2 = (14S,15R)-epoxy-(5Z,8Z,11Z)-eicosatrienoate + oxidized [NADPH--hemoprotein reductase] + H2O + H(+). It catalyses the reaction (5Z,8Z,11Z,14Z,17Z)-eicosapentaenoate + reduced [NADPH--hemoprotein reductase] + O2 = (17R,18S)-epoxy-(5Z,8Z,11Z,14Z)-eicosatetraenoate + oxidized [NADPH--hemoprotein reductase] + H2O + H(+). The catalysed reaction is (4Z,7Z,10Z,13Z,16Z,19Z)-docosahexaenoate + reduced [NADPH--hemoprotein reductase] + O2 = (19R,20S)-epoxy-(4Z,7Z,10Z,13Z,16Z)-docosapentaenoate + oxidized [NADPH--hemoprotein reductase] + H2O + H(+). It carries out the reaction (5S)-hydroperoxy-(6E,8Z,11Z,14Z)-eicosatetraenoate = 5-oxo-(6E,8Z,11Z,14Z)-eicosatetraenoate + H2O. The enzyme catalyses (12S)-hydroperoxy-(5Z,8Z,10E,14Z)-eicosatetraenoate = 12-oxo-(5Z,8Z,10E,14Z)-eicosatetraenoate + H2O. It catalyses the reaction (15S)-hydroperoxy-(5Z,8Z,11Z,13E)-eicosatetraenoate = 15-oxo-(5Z,8Z,11Z,13E)-eicosatetraenoate + H2O. The catalysed reaction is (13S)-hydroperoxy-(9Z,11E)-octadecadienoate = 13-oxo-(9Z,11E)-octadecadienoate + H2O. It carries out the reaction (5Z,8Z,11Z,14Z)-eicosatetraenoate + reduced [NADPH--hemoprotein reductase] + O2 = 13-hydroxy-(5Z,8Z,11Z,14Z)-eicosatetraenoate + oxidized [NADPH--hemoprotein reductase] + H2O + H(+). The enzyme catalyses (5Z,8Z,11Z,14Z)-eicosatetraenoate + reduced [NADPH--hemoprotein reductase] + O2 = 19-hydroxy-(5Z,8Z,11Z,14Z)-eicosatetraenoate + oxidized [NADPH--hemoprotein reductase] + H2O + H(+). It catalyses the reaction (9Z,12Z)-octadecadienoate + reduced [NADPH--hemoprotein reductase] + O2 = 11-hydroxy-(9Z,12Z)-octadecadienoate + oxidized [NADPH--hemoprotein reductase] + H2O + H(+). It functions in the pathway cofactor metabolism; retinol metabolism. The protein operates within steroid metabolism; cholesterol metabolism. Its pathway is lipid metabolism; arachidonate metabolism. Functionally, a cytochrome P450 monooxygenase involved in the metabolism of various endogenous substrates, including fatty acids, steroid hormones and vitamins. Mechanistically, uses molecular oxygen inserting one oxygen atom into a substrate, and reducing the second into a water molecule, with two electrons provided by NADPH via cytochrome P450 reductase (NADPH--hemoprotein reductase). Catalyzes the hydroxylation of carbon-hydrogen bonds. Exhibits high catalytic activity for the formation of hydroxyestrogens from estrone (E1) and 17beta-estradiol (E2), namely 2-hydroxy E1 and E2. Metabolizes cholesterol toward 25-hydroxycholesterol, a physiological regulator of cellular cholesterol homeostasis. May act as a major enzyme for all-trans retinoic acid biosynthesis in the liver. Catalyzes two successive oxidative transformation of all-trans retinol to all-trans retinal and then to the active form all-trans retinoic acid. Primarily catalyzes stereoselective epoxidation of the last double bond of polyunsaturated fatty acids (PUFA), displaying a strong preference for the (R,S) stereoisomer. Catalyzes bisallylic hydroxylation and omega-1 hydroxylation of PUFA. May also participate in eicosanoids metabolism by converting hydroperoxide species into oxo metabolites (lipoxygenase-like reaction, NADPH-independent). Plays a role in the oxidative metabolism of xenobiotics. Catalyzes the N-hydroxylation of heterocyclic amines and the O-deethylation of phenacetin. Metabolizes caffeine via N3-demethylation. The sequence is that of Cytochrome P450 1A2 from Homo sapiens (Human).